A 529-amino-acid chain; its full sequence is Transcription activator of gluconeogenesis ERT1 (529 aa).

Residues 1-31 (MCTPDENDYKTSTDPDTSANTNHTLEKKKRK) form a disordered region. Over residues 14 to 23 (DPDTSANTNH) the composition is skewed to polar residues. The zn(2)-C6 fungal-type DNA-binding region spans 40–68 (CVNCSRLHVSCEAKRPCLRCISKGLTATC). Over residues 174–193 (SNSTIGNSSNNSPTGTNTSP) the composition is skewed to low complexity. The disordered stretch occupies residues 174–198 (SNSTIGNSSNNSPTGTNTSPEETEM). A PAS domain is found at 408–480 (TLLEYVKFIA…KTLSKVAYRD (73 aa)).

This sequence belongs to the ERT1/acuK family.

It localises to the cytoplasm. The protein resides in the nucleus. Its function is as follows. Transcription factor which regulates nonfermentable carbon utilization. Activator of gluconeogenetic genes like PCK1. Involved in restriction of Ty1 transposition. This Saccharomyces cerevisiae (strain ATCC 204508 / S288c) (Baker's yeast) protein is Transcription activator of gluconeogenesis ERT1 (ERT1).